The sequence spans 957 residues: Vacuolar membrane protease (957 aa).

Residues 1-10 (MARYNPFSFT) are Cytoplasmic-facing. The chain crosses the membrane as a helical span at residues 11–31 (PGPVVFFTTVIYVGLFAALLV). The Vacuolar portion of the chain corresponds to 32 to 369 (THLTVPDYPS…RVFVVFQLHT (338 aa)). N-linked (GlcNAc...) asparagine glycosylation is found at asparagine 48, asparagine 105, and asparagine 136. Zn(2+) is bound by residues histidine 152 and aspartate 164. The active-site Proton acceptor is the glutamate 198. Residues glutamate 199, glutamate 224, and histidine 297 each coordinate Zn(2+). A helical transmembrane segment spans residues 370-390 (LFALCVTLLVVAPIALIGLTF). The Cytoplasmic segment spans residues 391 to 423 (GLSKADKNYLLARKAFVYSSDDDNPVQLYGWRG). The helical transmembrane segment at 424–444 (FFRFPIVFVSATAVVVALAYL) threads the bilayer. At 445-450 (LVRFNA) the chain is on the vacuolar side. The chain crosses the membrane as a helical span at residues 451-471 (FIIYSSPFAVWSMMLSAWFFV). Topologically, residues 472 to 490 (AWFFSRGADAMRPSALQRM) are cytoplasmic. The helical transmembrane segment at 491 to 511 (YALIWLFIGSFVLLTIITVFV) threads the bilayer. Residues 512–521 (NNYQVVAGYP) are Vacuolar-facing. The chain crosses the membrane as a helical span at residues 522-542 (ALFYFAVVFAALMLSYLELFF). The Cytoplasmic portion of the chain corresponds to 543–642 (APTKSAYARH…YPGEQEWSGK (100 aa)). Disordered regions lie at residues 560-591 (RRNSESASRPLTGSTTAARSDDRPVADDDATE) and 603-628 (FTRYGSRRDSTSEGDEDHAQGSRRLD). Residues 564–577 (ESASRPLTGSTTAA) show a composition bias toward polar residues. The helical transmembrane segment at 643 to 663 (LPSWIWIIQLLLLAPLVIVLV) threads the bilayer. Residues 664–685 (GQVALLLTSALYQTPSDGNSPL) are Vacuolar-facing. Residues 686–706 (FIYLAIAALSVLLLAPTGPFI) traverse the membrane as a helical segment. The Cytoplasmic segment spans residues 707–713 (HRFTYHV). The chain crosses the membrane as a helical span at residues 714–734 (PTFLFLVCLATVIYNLVAFPF). The Vacuolar portion of the chain corresponds to 735–957 (SRDHRLKVYF…LVEGFKQFEI (223 aa)). Residues asparagine 782, asparagine 818, and asparagine 834 are each glycosylated (N-linked (GlcNAc...) asparagine).

It belongs to the peptidase M28 family. Zn(2+) is required as a cofactor.

The protein resides in the vacuole membrane. Functionally, may be involved in vacuolar sorting and osmoregulation. This Pyrenophora tritici-repentis (strain Pt-1C-BFP) (Wheat tan spot fungus) protein is Vacuolar membrane protease.